A 675-amino-acid chain; its full sequence is uncharacterized protein (675 aa).

The next 4 membrane-spanning stretches (helical) occupy residues 2 to 22 (QHTF…DFFF), 397 to 417 (LFLL…VFIA), 448 to 468 (LLVA…LCCY), and 481 to 501 (IFVY…TYAA). Disordered regions lie at residues 616–635 (YSPN…DIND) and 646–675 (QRMG…ELSD). Acidic residues predominate over residues 665–675 (VFSESDEELSD). At S669 the chain carries Phosphoserine.

Belongs to the 1-acyl-sn-glycerol-3-phosphate acyltransferase family.

Its subcellular location is the endoplasmic reticulum membrane. This is an uncharacterized protein from Schizosaccharomyces pombe (strain 972 / ATCC 24843) (Fission yeast).